Consider the following 140-residue polypeptide: Protein ApaG (140 aa).

The region spanning 13–137 (EARTRDIVVR…FSLHLPGAAM (125 aa)) is the ApaG domain.

The sequence is that of Protein ApaG from Caulobacter vibrioides (strain ATCC 19089 / CIP 103742 / CB 15) (Caulobacter crescentus).